The chain runs to 335 residues: Tetraacyldisaccharide 4'-kinase (335 aa).

An ATP-binding site is contributed by T58–T65.

It belongs to the LpxK family.

It catalyses the reaction a lipid A disaccharide + ATP = a lipid IVA + ADP + H(+). It functions in the pathway glycolipid biosynthesis; lipid IV(A) biosynthesis; lipid IV(A) from (3R)-3-hydroxytetradecanoyl-[acyl-carrier-protein] and UDP-N-acetyl-alpha-D-glucosamine: step 6/6. In terms of biological role, transfers the gamma-phosphate of ATP to the 4'-position of a tetraacyldisaccharide 1-phosphate intermediate (termed DS-1-P) to form tetraacyldisaccharide 1,4'-bis-phosphate (lipid IVA). This Shewanella sp. (strain MR-7) protein is Tetraacyldisaccharide 4'-kinase.